Here is a 123-residue protein sequence, read N- to C-terminus: Large ribosomal subunit protein uL22c (123 aa).

Belongs to the universal ribosomal protein uL22 family. In terms of assembly, part of the 50S ribosomal subunit.

Its subcellular location is the plastid. The protein localises to the chloroplast. In terms of biological role, this protein binds specifically to 23S rRNA. Its function is as follows. The globular domain of the protein is located near the polypeptide exit tunnel on the outside of the subunit, while an extended beta-hairpin is found that lines the wall of the exit tunnel in the center of the 70S ribosome. The polypeptide is Large ribosomal subunit protein uL22c (rpl22) (Chara vulgaris (Common stonewort)).